Here is a 728-residue protein sequence, read N- to C-terminus: Lanosterol synthase (728 aa).

Residues 117–159 form a PFTB 1 repeat; sequence RVEMIRYIVNTAHPVDGGWGLHSVDKSTCFGTTMNYVCLRLLG. D450 (proton donor) is an active-site residue. 2 PFTB repeats span residues 561 to 602 and 611 to 657; these read ISSA…HTVG and VKKG…ALIG.

The protein belongs to the terpene cyclase/mutase family.

It localises to the lipid droplet. It is found in the endoplasmic reticulum membrane. The catalysed reaction is (S)-2,3-epoxysqualene = lanosterol. It functions in the pathway terpene metabolism; lanosterol biosynthesis; lanosterol from farnesyl diphosphate: step 3/3. Lanosterol synthase; part of the third module of ergosterol biosynthesis pathway that includes the late steps of the pathway. ERG7 catalyzes the cyclization of (S)-2,3 oxidosqualene to lanosterol, a reaction that forms the sterol core. The third module or late pathway involves the ergosterol synthesis itself through consecutive reactions that mainly occur in the endoplasmic reticulum (ER) membrane. Firstly, the squalene synthase ERG9 catalyzes the condensation of 2 farnesyl pyrophosphate moieties to form squalene, which is the precursor of all steroids. Squalene synthase is crucial for balancing the incorporation of farnesyl diphosphate (FPP) into sterol and nonsterol isoprene synthesis. Secondly, the squalene epoxidase ERG1 catalyzes the stereospecific oxidation of squalene to (S)-2,3-epoxysqualene, which is considered to be a rate-limiting enzyme in steroid biosynthesis. Then, the lanosterol synthase ERG7 catalyzes the cyclization of (S)-2,3 oxidosqualene to lanosterol, a reaction that forms the sterol core. In the next steps, lanosterol is transformed to zymosterol through a complex process involving various demethylation, reduction and desaturation reactions. The lanosterol 14-alpha-demethylase ERG11 (also known as CYP51) catalyzes C14-demethylation of lanosterol to produce 4,4'-dimethyl cholesta-8,14,24-triene-3-beta-ol, which is critical for ergosterol biosynthesis. The C-14 reductase ERG24 reduces the C14=C15 double bond of 4,4-dimethyl-cholesta-8,14,24-trienol to produce 4,4-dimethyl-cholesta-8,24-dienol. 4,4-dimethyl-cholesta-8,24-dienol is substrate of the C-4 demethylation complex ERG25-ERG26-ERG27 in which ERG25 catalyzes the three-step monooxygenation required for the demethylation of 4,4-dimethyl and 4alpha-methylsterols, ERG26 catalyzes the oxidative decarboxylation that results in a reduction of the 3-beta-hydroxy group at the C-3 carbon to an oxo group, and ERG27 is responsible for the reduction of the keto group on the C-3. ERG28 has a role as a scaffold to help anchor ERG25, ERG26 and ERG27 to the endoplasmic reticulum and ERG29 regulates the activity of the iron-containing C4-methylsterol oxidase ERG25. Then, the sterol 24-C-methyltransferase ERG6 catalyzes the methyl transfer from S-adenosyl-methionine to the C-24 of zymosterol to form fecosterol. The C-8 sterol isomerase ERG2 catalyzes the reaction which results in unsaturation at C-7 in the B ring of sterols and thus converts fecosterol to episterol. The sterol-C5-desaturase ERG3 then catalyzes the introduction of a C-5 double bond in the B ring to produce 5-dehydroepisterol. The C-22 sterol desaturase ERG5 further converts 5-dehydroepisterol into ergosta-5,7,22,24(28)-tetraen-3beta-ol by forming the C-22(23) double bond in the sterol side chain. Finally, ergosta-5,7,22,24(28)-tetraen-3beta-ol is substrate of the C-24(28) sterol reductase ERG4 to produce ergosterol. The sequence is that of Lanosterol synthase from Candida albicans (strain SC5314 / ATCC MYA-2876) (Yeast).